Here is a 294-residue protein sequence, read N- to C-terminus: Probable endonuclease 4 (294 aa).

Residues H78, H118, E155, D189, H192, H226, D239, H241, and E271 each coordinate Zn(2+).

It belongs to the AP endonuclease 2 family. Zn(2+) is required as a cofactor.

It catalyses the reaction Endonucleolytic cleavage to 5'-phosphooligonucleotide end-products.. Functionally, endonuclease IV plays a role in DNA repair. It cleaves phosphodiester bonds at apurinic or apyrimidinic (AP) sites, generating a 3'-hydroxyl group and a 5'-terminal sugar phosphate. The polypeptide is Probable endonuclease 4 (Oleidesulfovibrio alaskensis (strain ATCC BAA-1058 / DSM 17464 / G20) (Desulfovibrio alaskensis)).